A 650-amino-acid chain; its full sequence is Threonine--tRNA ligase (650 aa).

The TGS domain occupies Met-1–Thr-66. A catalytic region spans residues Asp-247–Pro-538. Zn(2+) contacts are provided by Cys-338, His-389, and His-515.

Belongs to the class-II aminoacyl-tRNA synthetase family. As to quaternary structure, homodimer. The cofactor is Zn(2+).

Its subcellular location is the cytoplasm. The catalysed reaction is tRNA(Thr) + L-threonine + ATP = L-threonyl-tRNA(Thr) + AMP + diphosphate + H(+). Functionally, catalyzes the attachment of threonine to tRNA(Thr) in a two-step reaction: L-threonine is first activated by ATP to form Thr-AMP and then transferred to the acceptor end of tRNA(Thr). Also edits incorrectly charged L-seryl-tRNA(Thr). The sequence is that of Threonine--tRNA ligase from Bordetella petrii (strain ATCC BAA-461 / DSM 12804 / CCUG 43448).